The primary structure comprises 239 residues: Tubulin beta-3 chain (239 aa).

Residue Asn22 coordinates GTP. The tract at residues 207–239 (EESNMNDLVSEYQQYQDASAEPXXEQEEDYEEA) is disordered. Residues 230–239 (XEQEEDYEEA) show a composition bias toward acidic residues.

This sequence belongs to the tubulin family. As to quaternary structure, dimer of alpha and beta chains. A typical microtubule is a hollow water-filled tube with an outer diameter of 25 nm and an inner diameter of 15 nM. Alpha-beta heterodimers associate head-to-tail to form protofilaments running lengthwise along the microtubule wall with the beta-tubulin subunit facing the microtubule plus end conferring a structural polarity. Microtubules usually have 13 protofilaments but different protofilament numbers can be found in some organisms and specialized cells. Requires Mg(2+) as cofactor.

The protein resides in the cytoplasm. It localises to the cytoskeleton. Functionally, tubulin is the major constituent of microtubules, a cylinder consisting of laterally associated linear protofilaments composed of alpha- and beta-tubulin heterodimers. Microtubules grow by the addition of GTP-tubulin dimers to the microtubule end, where a stabilizing cap forms. Below the cap, tubulin dimers are in GDP-bound state, owing to GTPase activity of alpha-tubulin. The protein is Tubulin beta-3 chain (TUBB3) of Anemia phyllitidis (Fern).